The chain runs to 47 residues: Potassium channel toxin alpha-KTx 7.1 (47 aa).

The signal sequence occupies residues 1 to 12; it reads RGSVDYKDDDDK. 3 disulfide bridges follow: Cys16-Cys37, Cys22-Cys42, and Cys26-Cys44.

It belongs to the short scorpion toxin superfamily. Potassium channel inhibitor family. Alpha-KTx 07 subfamily. In terms of tissue distribution, expressed by the venom gland.

The protein localises to the secreted. In terms of biological role, potent inhibitor of the A-type voltage-gated potassium channels. Most potent inhibitor of Kv1.2/KCNA2 channels. Reversibly block the Shaker B potassium-channels (Kv1.1 sub-family). In Pandinus imperator (Emperor scorpion), this protein is Potassium channel toxin alpha-KTx 7.1 (PTX-1).